Reading from the N-terminus, the 447-residue chain is Pup--protein ligase 2 (447 aa).

A Mg(2+)-binding site is contributed by Glu-4. Arg-48 contacts ATP. Mg(2+) is bound at residue Tyr-50. Asp-52 (proton acceptor) is an active-site residue. Residue Glu-58 participates in Mg(2+) binding. 2 residues coordinate ATP: Thr-61 and Trp-414.

The protein belongs to the Pup ligase/Pup deamidase family. Pup-conjugating enzyme subfamily.

The catalysed reaction is ATP + [prokaryotic ubiquitin-like protein]-L-glutamate + [protein]-L-lysine = ADP + phosphate + N(6)-([prokaryotic ubiquitin-like protein]-gamma-L-glutamyl)-[protein]-L-lysine.. Its pathway is protein degradation; proteasomal Pup-dependent pathway. It functions in the pathway protein modification; protein pupylation. Catalyzes the covalent attachment of the prokaryotic ubiquitin-like protein modifier Pup to the proteasomal substrate proteins, thereby targeting them for proteasomal degradation. This tagging system is termed pupylation. The ligation reaction involves the side-chain carboxylate of the C-terminal glutamate of Pup and the side-chain amino group of a substrate lysine. The chain is Pup--protein ligase 2 from Rhodococcus erythropolis (Arthrobacter picolinophilus).